The primary structure comprises 870 residues: Linoleate 9S-lipoxygenase 2 (870 aa).

The region spanning 32 to 158 is the PLAT domain; sequence NDFGATVIDG…KYRYNRVFFS (127 aa). Residues 161–870 enclose the Lipoxygenase domain; the sequence is TSLPSKMPAA…ARGIPNSISI (710 aa). Positions 203–243 are disordered; it reads YNDLGEPDSGNPRPVLGGSPDRPYPRRGRTGRKPTKTDPTA. Residues 227 to 236 show a composition bias toward basic residues; it reads PRRGRTGRKP. Fe cation is bound by residues H525, H530, H716, N720, and I870.

It belongs to the lipoxygenase family. Monomer. Requires Fe cation as cofactor.

The protein localises to the cytoplasm. It catalyses the reaction (9Z,12Z)-octadecadienoate + O2 = (9S)-hydroperoxy-(10E,12Z)-octadecadienoate. The protein operates within lipid metabolism; oxylipin biosynthesis. Its function is as follows. Plant lipoxygenase may be involved in a number of diverse aspects of plant physiology including growth and development, pest resistance, and senescence or responses to wounding. Catalyzes the hydroperoxidation of lipids containing a cis,cis-1,4-pentadiene structure. This is Linoleate 9S-lipoxygenase 2 (LOX1.1) from Oryza sativa subsp. japonica (Rice).